Here is a 259-residue protein sequence, read N- to C-terminus: 5'-nucleotidase SurE (259 aa).

A divalent metal cation-binding residues include D8, D9, S40, and N92.

The protein belongs to the SurE nucleotidase family. Requires a divalent metal cation as cofactor.

The protein resides in the cytoplasm. The enzyme catalyses a ribonucleoside 5'-phosphate + H2O = a ribonucleoside + phosphate. Functionally, nucleotidase that shows phosphatase activity on nucleoside 5'-monophosphates. This Xanthomonas oryzae pv. oryzae (strain MAFF 311018) protein is 5'-nucleotidase SurE.